The sequence spans 103 residues: Large ribosomal subunit protein P2 (103 aa).

Positions 64-103 (LAISSSQKSEPAQPADTAESTQATENKEEEDEDFDIFAAF) are disordered. The segment covering 90 to 103 (KEEEDEDFDIFAAF) has biased composition (acidic residues).

This sequence belongs to the eukaryotic ribosomal protein P1/P2 family. Component of the large ribosomal subunit.

It is found in the cytoplasm. Functionally, plays an important role in the elongation step of protein synthesis. The chain is Large ribosomal subunit protein P2 (RPP2A) from Encephalitozoon cuniculi (strain GB-M1) (Microsporidian parasite).